The following is a 225-amino-acid chain: T4 protein (225 aa).

It belongs to the poxviruses B9 family.

The protein is T4 protein of Rabbit fibroma virus (strain Kasza) (RFV).